The primary structure comprises 329 residues: Synaptonemal complex central element protein 1 (329 aa).

A disordered region spans residues 1 to 33; it reads MATRPQPLSVEPEGSADLLHGPEGARGRRGSTQ. Coiled coils occupy residues 28–168 and 194–294; these read RRGS…ETLM and KEQL…ILAQ. A disordered region spans residues 295–329; the sequence is IQSTQKEEDSSWRTASPKPLEAHKETVQERPSSRT. The segment covering 314-329 has biased composition (basic and acidic residues); the sequence is LEAHKETVQERPSSRT.

This sequence belongs to the SYCE family. As to quaternary structure, homodimer. Found in a complex with SYCP1 and SYCE2. Interacts with SYCP1, SYCE2 and SYCE3. Interacts with SIX6OS1.

It is found in the nucleus. Its subcellular location is the chromosome. Its function is as follows. Major component of the transverse central element of synaptonemal complexes (SCS), formed between homologous chromosomes during meiotic prophase. Requires SYCP1 in order to be incorporated into the central element. May have a role in the synaptonemal complex assembly, stabilization and recombination. This Rattus norvegicus (Rat) protein is Synaptonemal complex central element protein 1 (Syce1).